We begin with the raw amino-acid sequence, 480 residues long: Probable cyclodipeptide synthase PUL1 (480 aa).

The protein operates within siderophore biosynthesis. Functionally, probable cyclodipeptide synthase; part of the PUL gene cluster that mediates the formation of pulcherrimin, a red iron-containing pigment composed of two cyclized and modified leucine molecules that acts as a siderophore, a chelator that binds iron outside the cell for subsequent uptake. Two leucine molecules are cyclized via a cyclodipeptide synthase, and the resulting diketopiperazine is oxidized by a cytochrome P450 monooxygenase to generate pulcherriminic acid (PA), which can then spontaneously bind iron to form pulcherrimin. The probable cyclodipeptide synthase PUL1 and the cytochrome P450 monooxygenase PUL2 encode the enzymes responsible for the two-step pulcherrimin biosynthesis pathway. This Kluyveromyces lactis (strain ATCC 8585 / CBS 2359 / DSM 70799 / NBRC 1267 / NRRL Y-1140 / WM37) (Yeast) protein is Probable cyclodipeptide synthase PUL1.